Here is a 349-residue protein sequence, read N- to C-terminus: NADP-dependent alcohol dehydrogenase C 1 (349 aa).

Residues cysteine 41, histidine 63, cysteine 94, cysteine 97, cysteine 100, cysteine 108, and cysteine 159 each contribute to the Zn(2+) site. An Isoglutamyl lysine isopeptide (Lys-Gln) (interchain with Q-Cter in protein Pup) cross-link involves residue lysine 210.

It belongs to the zinc-containing alcohol dehydrogenase family. It depends on Zn(2+) as a cofactor.

The enzyme catalyses a primary alcohol + NADP(+) = an aldehyde + NADPH + H(+). Functionally, prefers aldehydes over alcohols. This is NADP-dependent alcohol dehydrogenase C 1 (adhc1) from Mycolicibacterium smegmatis (strain ATCC 700084 / mc(2)155) (Mycobacterium smegmatis).